The chain runs to 509 residues: MLPALKKGGRPRDALGRFIRHHERLPVSLADTRGVLFVVSEMADFIKAGGLGDVAAALPRALRHRYDVRVLIPGYRAVLERAGKVEIVGRVLAHAALPACDIGRIVQSDGLPIYILLSRELFERDGSPYVSTSGSEFEDNAIRFATLSHAAADIAAGHAGLGWKPRLLHLNDWPCALAAGYVRWSGGTTPCLLTIHNLAYQGLVPYSMAGALGIPAERVAELEFYGQMSFLRGGIVNADHVNTVSVSYAKQITGPAQGCGLDRLLAGRAAKGALTGIVNGIDASWDPRTDEYLDSHFSVNQWQGRQDNAAQVRKAFGLRESTGPLFAVVSRLVHQKGLDLICEVAPQIVAAGGQIAVIGGGEPDIERQVAELTRRYPGQVGAFIGFEEGLARRMFAGADFLLMPSRFEPCGLSQMYAQRFGCLPIAHATGGLIDTVDDGVTGFLFQHASVEALRRCLERAFRTFRLPGLLAAMRRAAMLRPSGWDVAGNKYLSLYERTAAIAPALATVS.

An ADP-alpha-D-glucose-binding site is contributed by K47.

Belongs to the glycosyltransferase 1 family. Bacterial/plant glycogen synthase subfamily.

The catalysed reaction is [(1-&gt;4)-alpha-D-glucosyl](n) + ADP-alpha-D-glucose = [(1-&gt;4)-alpha-D-glucosyl](n+1) + ADP + H(+). Its pathway is glycan biosynthesis; glycogen biosynthesis. Functionally, synthesizes alpha-1,4-glucan chains using ADP-glucose. This Xanthomonas oryzae pv. oryzae (strain MAFF 311018) protein is Glycogen synthase.